Here is a 359-residue protein sequence, read N- to C-terminus: Non-classical arabinogalactan protein 31 (359 aa).

Positions 1 to 24 (MGFIGKSVLVSLVALWCFTSSVFT) are cleaved as a signal peptide. The disordered stretch occupies residues 31–215 (TQTPSLAPAP…PPVSPPTKPP (185 aa)). Basic residues predominate over residues 44–66 (HHGHHHPHPPHHHHPHPHPHPHP). Residues 67-215 (PAKSPVKPPV…PPVSPPTKPP (149 aa)) are compositionally biased toward pro residues. 4-hydroxyproline is present on residues proline 71, proline 75, proline 79, proline 82, proline 83, proline 87, proline 91, proline 95, proline 99, proline 103, proline 107, proline 111, proline 114, proline 115, proline 119, proline 123, proline 127, proline 131, proline 135, proline 139, proline 143, proline 147, proline 151, proline 155, proline 159, proline 163, proline 167, proline 171, proline 175, proline 179, proline 183, proline 186, proline 187, proline 191, proline 195, proline 199, proline 203, proline 207, proline 210, proline 211, proline 215, and proline 219. O-linked (Ara...) hydroxyproline glycosylation is found at proline 71, proline 75, proline 79, proline 82, proline 83, proline 87, proline 91, proline 95, proline 99, proline 103, proline 107, proline 111, proline 114, proline 115, proline 119, proline 123, proline 127, proline 131, proline 135, proline 139, proline 143, proline 147, proline 151, proline 155, proline 159, proline 163, proline 167, proline 171, proline 175, proline 179, proline 183, proline 186, proline 187, proline 191, proline 195, proline 199, proline 203, proline 207, proline 210, proline 211, proline 215, and proline 219. The stretch at 90–109 (PPVYPPTKAPVKPPTKPPVK) is repeat 1. 3 repeat units span residues 122–141 (PPVY…PPVK), 142–161 (PPVY…PPVK), and 162–181 (PPVY…PPVK). Residues asparagine 226 and asparagine 269 are each glycosylated (N-linked (GlcNAc...) asparagine).

Belongs to the non-classical AGP family. In terms of processing, hydroxylated on numerous prolines in the proline-rich region. Post-translationally, O-glycosylated on numerous hydroxyprolines in the proline-rich region; noncontiguous hydroxylproline residues are glycosylated with arabinogalactan. Expressed in vascular bundles of roots, leaves, sepals and stamen filaments, and pistils but not stigma.

The protein localises to the secreted. Its subcellular location is the cell wall. In terms of biological role, proteoglycan that may contribute to the strengthening of cell walls. This chain is Non-classical arabinogalactan protein 31, found in Arabidopsis thaliana (Mouse-ear cress).